We begin with the raw amino-acid sequence, 322 residues long: N-acetyl-gamma-glutamyl-phosphate reductase (322 aa).

Residue cysteine 132 is part of the active site.

It belongs to the NAGSA dehydrogenase family. Type 1 subfamily.

Its subcellular location is the cytoplasm. It carries out the reaction N-acetyl-L-glutamate 5-semialdehyde + phosphate + NADP(+) = N-acetyl-L-glutamyl 5-phosphate + NADPH + H(+). It participates in amino-acid biosynthesis; L-arginine biosynthesis; N(2)-acetyl-L-ornithine from L-glutamate: step 3/4. Functionally, catalyzes the NADPH-dependent reduction of N-acetyl-5-glutamyl phosphate to yield N-acetyl-L-glutamate 5-semialdehyde. This Bacteroides fragilis (strain YCH46) protein is N-acetyl-gamma-glutamyl-phosphate reductase.